The primary structure comprises 594 residues: Putative lipase ATG15-1 (594 aa).

Over 1–12 (MRRRPLCTSASR) the chain is Cytoplasmic. A helical; Signal-anchor for type II membrane protein membrane pass occupies residues 13 to 33 (VTASLLLSFLAVSSAAELPIL). The Lumenal portion of the chain corresponds to 34 to 594 (PAPPISPQPH…ANHFVYVLHA (561 aa)). Asn-144, Asn-179, Asn-201, Asn-259, and Asn-283 each carry an N-linked (GlcNAc...) asparagine glycan. Catalysis depends on Ser-299, which acts as the Charge relay system. Asn-432 and Asn-445 each carry an N-linked (GlcNAc...) asparagine glycan. A compositionally biased stretch (low complexity) spans 447–469 (TETTTTSTSKPTSTSKSSKSNTR). Disordered regions lie at residues 447–473 (TETT…TRTE) and 489–509 (TGTQ…TSTC). Residues Asn-576 and Asn-582 are each glycosylated (N-linked (GlcNAc...) asparagine).

It belongs to the AB hydrolase superfamily. Lipase family. Binds to both phosphatidylinositol (PI) and phosphatidylinositol 3,5-bisphosphate (PIP2).

It localises to the endosome. The protein resides in the multivesicular body membrane. The protein localises to the prevacuolar compartment membrane. It carries out the reaction a triacylglycerol + H2O = a diacylglycerol + a fatty acid + H(+). Its function is as follows. Lipase which is essential for lysis of subvacuolar cytoplasm to vacuole targeted bodies and intravacuolar autophagic bodies. Involved in the lysis of intravacuolar multivesicular body (MVB) vesicles. The intravacuolar membrane disintegration by ATG15 is critical to life span extension. This chain is Putative lipase ATG15-1 (ATG15-1), found in Phaeosphaeria nodorum (strain SN15 / ATCC MYA-4574 / FGSC 10173) (Glume blotch fungus).